A 561-amino-acid polypeptide reads, in one-letter code: MSTPANYTRVPLCEPEELPDDIQKENEYGTLDSPGHLYQVKSRHGKPLPEPVVDTPPYYISLLTYLNYLILIILGHVHDFLGMTFQKNKHLDLLEHDGLAPWFSNFESFYVRRIKMRIDDCFSRPTTGVPGRFIRCIDRISHNINEYFTYSGAVYPCMNLSSYNYLGFAQSKGQCTDAALESVDKYSIQSGGPRAQIGTTDLHIKAEKLVARFIGKEDALVFSMGYGTNANLFNAFLDKKCLVISDELNHTSIRTGVRLSGAAVRTFKHGDMVGLEKLIREQIVLGQPKTNRPWKKILICAEGLFSMEGTLCNLPKLVELKKKYKCYLFIDEAHSIGAMGPTGRGVCEIFGVDPKDVDILMGTFTKSFGAAGGYIAADQWIIDRLRLDLTTVSYSESMPAPVLAQTISSLQTISGEICPGQGTERLQRIAFNSRYLRLALQRLGFIVYGVADSPVIPLLLYCPSKMPAFSRMMLQRRIAVVVVAYPATPLIESRVRFCMSASLTKEDIDYLLRHVSEVGDKLNLKSNSGKSSYDGKRQRWDIEEVIRRTPEDCKDDKYFVN.

The chain crosses the membrane as a helical span at residues 57–77 (PYYISLLTYLNYLILIILGHV). Position 366 is an N6-(pyridoxal phosphate)lysine (K366). The chain crosses the membrane as a helical span at residues 443–463 (LGFIVYGVADSPVIPLLLYCP).

Belongs to the class-II pyridoxal-phosphate-dependent aminotransferase family. As to quaternary structure, LCB1 and LCB2 encode essential subunits of the enzyme and form a heterodimer. Component of the SPOTS complex, at least composed of LCB1/2 (LCB1 and/or LCB2), ORM1/2 (ORM1 and/or ORM2), SAC1 and TSC3. Interacts with LCB1 and TSC3. It depends on pyridoxal 5'-phosphate as a cofactor.

Its subcellular location is the cytoplasm. It localises to the endoplasmic reticulum. The protein resides in the membrane. The enzyme catalyses L-serine + hexadecanoyl-CoA + H(+) = 3-oxosphinganine + CO2 + CoA. It participates in lipid metabolism; sphingolipid metabolism. Functionally, catalytic subunit of serine palmitoyltransferase (SPT), which catalyzes the committed step in the synthesis of sphingolipids, the condensation of serine with palmitoyl CoA to form the long chain base 3-ketosphinganine. The sequence is that of Serine palmitoyltransferase 2 (LCB2) from Saccharomyces cerevisiae (strain ATCC 204508 / S288c) (Baker's yeast).